The sequence spans 314 residues: tRNA uridine(34) hydroxylase (314 aa).

In terms of domain architecture, Rhodanese spans 140 to 234; it reads ARDDVILIDT…YLEETPPDES (95 aa). C194 acts as the Cysteine persulfide intermediate in catalysis.

The protein belongs to the TrhO family.

The catalysed reaction is uridine(34) in tRNA + AH2 + O2 = 5-hydroxyuridine(34) in tRNA + A + H2O. Catalyzes oxygen-dependent 5-hydroxyuridine (ho5U) modification at position 34 in tRNAs. This chain is tRNA uridine(34) hydroxylase, found in Acinetobacter baumannii (strain SDF).